A 79-amino-acid polypeptide reads, in one-letter code: Large ribosomal subunit protein bL28 (79 aa).

A disordered region spans residues 1-26; the sequence is MAKVCQVTGKRPQSGNNVSHANKKTN. The span at 11 to 20 shows a compositional bias: polar residues; the sequence is RPQSGNNVSH.

Belongs to the bacterial ribosomal protein bL28 family.

This is Large ribosomal subunit protein bL28 from Coxiella burnetii (strain CbuK_Q154) (Coxiella burnetii (strain Q154)).